The primary structure comprises 187 residues: GMP synthase [glutamine-hydrolyzing] subunit A (187 aa).

Residues 1–187 (MILIIDNHGQ…KNFAKLCGEL (187 aa)) form the Glutamine amidotransferase type-1 domain. Cys-76 acts as the Nucleophile in catalysis. Active-site residues include His-164 and Glu-166.

As to quaternary structure, heterodimer composed of a glutamine amidotransferase subunit (A) and a GMP-binding subunit (B).

It catalyses the reaction XMP + L-glutamine + ATP + H2O = GMP + L-glutamate + AMP + diphosphate + 2 H(+). It participates in purine metabolism; GMP biosynthesis; GMP from XMP (L-Gln route): step 1/1. In terms of biological role, catalyzes the synthesis of GMP from XMP. The polypeptide is GMP synthase [glutamine-hydrolyzing] subunit A (Methanopyrus kandleri (strain AV19 / DSM 6324 / JCM 9639 / NBRC 100938)).